We begin with the raw amino-acid sequence, 281 residues long: Release factor glutamine methyltransferase (281 aa).

The S-adenosyl-L-methionine site is built by E141 and N185. 185–188 (NPPY) serves as a coordination point for substrate.

Belongs to the protein N5-glutamine methyltransferase family. PrmC subfamily.

It catalyses the reaction L-glutaminyl-[peptide chain release factor] + S-adenosyl-L-methionine = N(5)-methyl-L-glutaminyl-[peptide chain release factor] + S-adenosyl-L-homocysteine + H(+). Functionally, methylates the class 1 translation termination release factors RF1/PrfA and RF2/PrfB on the glutamine residue of the universally conserved GGQ motif. This chain is Release factor glutamine methyltransferase, found in Mycolicibacterium smegmatis (strain ATCC 700084 / mc(2)155) (Mycobacterium smegmatis).